We begin with the raw amino-acid sequence, 483 residues long: Glycogen synthase (483 aa).

Lysine 15 provides a ligand contact to ADP-alpha-D-glucose.

Belongs to the glycosyltransferase 1 family. Bacterial/plant glycogen synthase subfamily.

It catalyses the reaction [(1-&gt;4)-alpha-D-glucosyl](n) + ADP-alpha-D-glucose = [(1-&gt;4)-alpha-D-glucosyl](n+1) + ADP + H(+). It functions in the pathway glycan biosynthesis; glycogen biosynthesis. Synthesizes alpha-1,4-glucan chains using ADP-glucose. This is Glycogen synthase from Desulfatibacillum aliphaticivorans.